The chain runs to 296 residues: Putative F-box protein At1g67623 (296 aa).

Positions 21 to 70 constitute an F-box domain; the sequence is SLCLDSLPEDLLVEISSCTGASSLSAVRNLRLVSKSFRRICDEKYVFYRL.

This Arabidopsis thaliana (Mouse-ear cress) protein is Putative F-box protein At1g67623.